Reading from the N-terminus, the 119-residue chain is Large ribosomal subunit protein uL24 (119 aa).

This sequence belongs to the universal ribosomal protein uL24 family. As to quaternary structure, part of the 50S ribosomal subunit.

Functionally, one of two assembly initiator proteins, it binds directly to the 5'-end of the 23S rRNA, where it nucleates assembly of the 50S subunit. Located at the polypeptide exit tunnel on the outside of the subunit. The chain is Large ribosomal subunit protein uL24 from Methanococcus maripaludis (strain C5 / ATCC BAA-1333).